The primary structure comprises 786 residues: Zinc finger transcription factor YRM1 (786 aa).

The segment at Met1–Arg25 is disordered. The zn(2)-C6 fungal-type DNA-binding region spans Cys31–Cys59. The disordered stretch occupies residues Pro721 to Thr747. The segment covering Asn737–Thr747 has biased composition (polar residues).

The protein localises to the cytoplasm. It localises to the nucleus. In terms of biological role, transcription factor involved in the regulation of multidrug resistance genes. Acts in concert with YRR1. This Saccharomyces cerevisiae (strain ATCC 204508 / S288c) (Baker's yeast) protein is Zinc finger transcription factor YRM1 (YRM1).